The sequence spans 288 residues: ATP synthase gamma chain (288 aa).

This sequence belongs to the ATPase gamma chain family. F-type ATPases have 2 components, CF(1) - the catalytic core - and CF(0) - the membrane proton channel. CF(1) has five subunits: alpha(3), beta(3), gamma(1), delta(1), epsilon(1). CF(0) has three main subunits: a, b and c.

It is found in the cell inner membrane. Functionally, produces ATP from ADP in the presence of a proton gradient across the membrane. The gamma chain is believed to be important in regulating ATPase activity and the flow of protons through the CF(0) complex. The chain is ATP synthase gamma chain from Aliivibrio salmonicida (strain LFI1238) (Vibrio salmonicida (strain LFI1238)).